A 433-amino-acid chain; its full sequence is Glutamate-1-semialdehyde 2,1-aminomutase (433 aa).

Lysine 266 carries the N6-(pyridoxal phosphate)lysine modification.

Belongs to the class-III pyridoxal-phosphate-dependent aminotransferase family. HemL subfamily. In terms of assembly, homodimer. Pyridoxal 5'-phosphate serves as cofactor.

Its subcellular location is the cytoplasm. The enzyme catalyses (S)-4-amino-5-oxopentanoate = 5-aminolevulinate. It participates in porphyrin-containing compound metabolism; protoporphyrin-IX biosynthesis; 5-aminolevulinate from L-glutamyl-tRNA(Glu): step 2/2. The polypeptide is Glutamate-1-semialdehyde 2,1-aminomutase (Psychrobacter cryohalolentis (strain ATCC BAA-1226 / DSM 17306 / VKM B-2378 / K5)).